Reading from the N-terminus, the 329-residue chain is DNA-directed RNA polymerase subunit alpha (329 aa).

An alpha N-terminal domain (alpha-NTD) region spans residues 1–235 (MQGSVTEFLK…EQLEAFVDLR (235 aa)). Positions 249–329 (FDPILLRPVD…NWPPASIADE (81 aa)) are alpha C-terminal domain (alpha-CTD).

This sequence belongs to the RNA polymerase alpha chain family. In terms of assembly, homodimer. The RNAP catalytic core consists of 2 alpha, 1 beta, 1 beta' and 1 omega subunit. When a sigma factor is associated with the core the holoenzyme is formed, which can initiate transcription.

The enzyme catalyses RNA(n) + a ribonucleoside 5'-triphosphate = RNA(n+1) + diphosphate. Functionally, DNA-dependent RNA polymerase catalyzes the transcription of DNA into RNA using the four ribonucleoside triphosphates as substrates. This chain is DNA-directed RNA polymerase subunit alpha, found in Enterobacter sp. (strain 638).